Reading from the N-terminus, the 67-residue chain is Beta-defensin 36 (67 aa).

A signal peptide spans 1–22 (MKLLLLTLAALLLVSQLTPGDA). 3 disulfides stabilise this stretch: Cys-25–Cys-52, Cys-32–Cys-46, and Cys-36–Cys-53.

This sequence belongs to the beta-defensin family.

It is found in the secreted. Has antibacterial activity. The polypeptide is Beta-defensin 36 (Defb36) (Mus musculus (Mouse)).